We begin with the raw amino-acid sequence, 581 residues long: Myoneurin (581 aa).

Residues 24–89 form the BTB domain; that stretch reads CDCTIVIGEF…IYTGTLNLDS (66 aa). Positions 167–193 are disordered; the sequence is PKQGALAKKSSQTKKKKKAFNSQKTGQ. 2 consecutive short sequence motifs (nuclear localization signal) follow at residues 174–190 and 256–261; these read KKSS…NSQK and KRKRGK. Phosphoserine is present on Ser288. 7 consecutive C2H2-type zinc fingers follow at residues 301 to 323, 329 to 351, 357 to 380, 386 to 408, 414 to 436, 442 to 464, and 470 to 493; these read PMCN…MRIH, YVCH…VRTH, YKCE…RMHH, YKCD…ARKH, YVCD…VRRH, YVCD…SRKH, and FICE…TKVH.

This sequence belongs to the krueppel C2H2-type zinc-finger protein family.

It localises to the nucleus. This is Myoneurin (MYNN) from Bos taurus (Bovine).